Reading from the N-terminus, the 208-residue chain is ATP-dependent Clp protease proteolytic subunit 2 (208 aa).

S102 (nucleophile) is an active-site residue. The active site involves H127.

It belongs to the peptidase S14 family. In terms of assembly, fourteen ClpP subunits assemble into 2 heptameric rings which stack back to back to give a disk-like structure with a central cavity, resembling the structure of eukaryotic proteasomes.

The protein resides in the cytoplasm. It catalyses the reaction Hydrolysis of proteins to small peptides in the presence of ATP and magnesium. alpha-casein is the usual test substrate. In the absence of ATP, only oligopeptides shorter than five residues are hydrolyzed (such as succinyl-Leu-Tyr-|-NHMec, and Leu-Tyr-Leu-|-Tyr-Trp, in which cleavage of the -Tyr-|-Leu- and -Tyr-|-Trp bonds also occurs).. Cleaves peptides in various proteins in a process that requires ATP hydrolysis. Has a chymotrypsin-like activity. Plays a major role in the degradation of misfolded proteins. The polypeptide is ATP-dependent Clp protease proteolytic subunit 2 (Chelativorans sp. (strain BNC1)).